Here is an 89-residue protein sequence, read N- to C-terminus: Exodeoxyribonuclease 7 small subunit (89 aa).

The disordered stretch occupies residues 1 to 22 (MRKKSSSNKEETALHPPPENFE).

It belongs to the XseB family. In terms of assembly, heterooligomer composed of large and small subunits.

The protein resides in the cytoplasm. It catalyses the reaction Exonucleolytic cleavage in either 5'- to 3'- or 3'- to 5'-direction to yield nucleoside 5'-phosphates.. Its function is as follows. Bidirectionally degrades single-stranded DNA into large acid-insoluble oligonucleotides, which are then degraded further into small acid-soluble oligonucleotides. This is Exodeoxyribonuclease 7 small subunit from Nitrosomonas europaea (strain ATCC 19718 / CIP 103999 / KCTC 2705 / NBRC 14298).